A 544-amino-acid polypeptide reads, in one-letter code: Chaperonin GroEL (544 aa).

ATP contacts are provided by residues 29-32, 86-90, Gly413, 477-479, and Asp493; these read TLGP, DGTTT, and DVL.

It belongs to the chaperonin (HSP60) family. As to quaternary structure, forms a cylinder of 14 subunits composed of two heptameric rings stacked back-to-back. Interacts with the co-chaperonin GroES.

The protein localises to the cytoplasm. The catalysed reaction is ATP + H2O + a folded polypeptide = ADP + phosphate + an unfolded polypeptide.. In terms of biological role, together with its co-chaperonin GroES, plays an essential role in assisting protein folding. The GroEL-GroES system forms a nano-cage that allows encapsulation of the non-native substrate proteins and provides a physical environment optimized to promote and accelerate protein folding. The sequence is that of Chaperonin GroEL from Clostridium kluyveri (strain NBRC 12016).